Consider the following 478-residue polypeptide: Dihydrolipoyl dehydrogenase (478 aa).

FAD-binding positions include 36-45 (ERYSTLGGVC), Lys-54, and Ala-117. The cysteines at positions 45 and 50 are disulfide-linked. Residues 183–187 (GGGII), Glu-206, Val-239, and 270–273 (AIGR) each bind NAD(+). Residues Asp-313 and Ala-321 each contribute to the FAD site. The active-site Proton acceptor is His-445.

This sequence belongs to the class-I pyridine nucleotide-disulfide oxidoreductase family. As to quaternary structure, homodimer. It depends on FAD as a cofactor.

Its subcellular location is the cytoplasm. The enzyme catalyses N(6)-[(R)-dihydrolipoyl]-L-lysyl-[protein] + NAD(+) = N(6)-[(R)-lipoyl]-L-lysyl-[protein] + NADH + H(+). Functionally, lipoamide dehydrogenase is a component of the alpha-ketoacid dehydrogenase complexes. The sequence is that of Dihydrolipoyl dehydrogenase (lpdA) from Haemophilus influenzae (strain ATCC 51907 / DSM 11121 / KW20 / Rd).